We begin with the raw amino-acid sequence, 367 residues long: Tetraprenyl-beta-curcumene synthase (367 aa).

It belongs to the large terpene synthase family.

It catalyses the reaction all-trans-heptaprenyl diphosphate = (R)-tetraprenyl-beta-curcumene + diphosphate. Functionally, catalyzes the transformation of a linear C35 prenyl diphosphate chain to form tetraprenyl-beta-curcumene. This is Tetraprenyl-beta-curcumene synthase (ytpB) from Bacillus subtilis (strain 168).